Reading from the N-terminus, the 454-residue chain is tRNA modification GTPase MnmE (454 aa).

The (6S)-5-formyl-5,6,7,8-tetrahydrofolate site is built by Arg-23, Glu-80, and Lys-120. The TrmE-type G domain maps to Gly-216–Gly-377. Residue Asn-226 participates in K(+) binding. GTP contacts are provided by residues Asn-226–Ser-231, Thr-245–Thr-251, Asp-270–Gly-273, Asn-335–Asp-338, and Ser-358–Arg-360. Residue Ser-230 participates in Mg(2+) binding. 3 residues coordinate K(+): Thr-245, Ile-247, and Thr-250. Thr-251 contacts Mg(2+). (6S)-5-formyl-5,6,7,8-tetrahydrofolate is bound at residue Lys-454.

The protein belongs to the TRAFAC class TrmE-Era-EngA-EngB-Septin-like GTPase superfamily. TrmE GTPase family. Homodimer. Heterotetramer of two MnmE and two MnmG subunits. K(+) serves as cofactor.

The protein resides in the cytoplasm. In terms of biological role, exhibits a very high intrinsic GTPase hydrolysis rate. Involved in the addition of a carboxymethylaminomethyl (cmnm) group at the wobble position (U34) of certain tRNAs, forming tRNA-cmnm(5)s(2)U34. The chain is tRNA modification GTPase MnmE from Escherichia coli (strain 55989 / EAEC).